Consider the following 100-residue polypeptide: Small ribosomal subunit protein uS14c (100 aa).

This sequence belongs to the universal ribosomal protein uS14 family. As to quaternary structure, part of the 30S ribosomal subunit.

The protein resides in the plastid. In terms of biological role, binds 16S rRNA, required for the assembly of 30S particles. The polypeptide is Small ribosomal subunit protein uS14c (Euglena longa (Euglenophycean alga)).